Reading from the N-terminus, the 396-residue chain is Elongation factor Tu 1 (396 aa).

The tr-type G domain occupies 10-206 (KPHINVGTIG…AMDAHIPQPE (197 aa)). The segment at 19-26 (GHVDHGKT) is G1. Residue 19–26 (GHVDHGKT) participates in GTP binding. T26 is a Mg(2+) binding site. The segment at 60 to 64 (GITIA) is G2. Positions 81–84 (DCPG) are G3. GTP-binding positions include 81-85 (DCPGH) and 136-139 (NKAD). Positions 136–139 (NKAD) are G4. Residues 174-176 (SAL) are G5.

This sequence belongs to the TRAFAC class translation factor GTPase superfamily. Classic translation factor GTPase family. EF-Tu/EF-1A subfamily. In terms of assembly, monomer.

The protein localises to the cytoplasm. The catalysed reaction is GTP + H2O = GDP + phosphate + H(+). Its function is as follows. GTP hydrolase that promotes the GTP-dependent binding of aminoacyl-tRNA to the A-site of ribosomes during protein biosynthesis. The protein is Elongation factor Tu 1 of Halorhodospira halophila (strain DSM 244 / SL1) (Ectothiorhodospira halophila (strain DSM 244 / SL1)).